Here is a 481-residue protein sequence, read N- to C-terminus: Ribulose bisphosphate carboxylase large chain (481 aa).

A propeptide spanning residues 1-2 (MS) is cleaved from the precursor. Pro-3 carries the N-acetylproline modification. The residue at position 14 (Lys-14) is an N6,N6,N6-trimethyllysine. Substrate-binding residues include Asn-123 and Thr-173. Catalysis depends on Lys-175, which acts as the Proton acceptor. Lys-177 contributes to the substrate binding site. 3 residues coordinate Mg(2+): Lys-201, Asp-203, and Glu-204. The residue at position 201 (Lys-201) is an N6-carboxylysine. Residue His-294 is the Proton acceptor of the active site. Substrate-binding residues include Arg-295, His-327, and Ser-379.

It belongs to the RuBisCO large chain family. Type I subfamily. Heterohexadecamer of 8 large chains and 8 small chains; disulfide-linked. The disulfide link is formed within the large subunit homodimers. Requires Mg(2+) as cofactor. Post-translationally, the disulfide bond which can form in the large chain dimeric partners within the hexadecamer appears to be associated with oxidative stress and protein turnover.

The protein resides in the plastid. The protein localises to the chloroplast. It catalyses the reaction 2 (2R)-3-phosphoglycerate + 2 H(+) = D-ribulose 1,5-bisphosphate + CO2 + H2O. The catalysed reaction is D-ribulose 1,5-bisphosphate + O2 = 2-phosphoglycolate + (2R)-3-phosphoglycerate + 2 H(+). RuBisCO catalyzes two reactions: the carboxylation of D-ribulose 1,5-bisphosphate, the primary event in carbon dioxide fixation, as well as the oxidative fragmentation of the pentose substrate in the photorespiration process. Both reactions occur simultaneously and in competition at the same active site. The polypeptide is Ribulose bisphosphate carboxylase large chain (Coffea arabica (Arabian coffee)).